A 700-amino-acid polypeptide reads, in one-letter code: Pentatricopeptide repeat-containing protein 1, mitochondrial (700 aa).

A disordered region spans residues 49-93 (SSSQLPLGQERQENTGSLGSDPSHSNSTATQEEDEEEEESFGTLS). The span at 62–78 (NTGSLGSDPSHSNSTAT) shows a compositional bias: polar residues. Positions 79-88 (QEEDEEEEES) are enriched in acidic residues. PPR repeat units lie at residues 135–171 (TPYW…RLQP), 172–206 (MESN…DLEP), 207–245 (SDAT…NFEL), 246–280 (NLKT…GHVV), 281–317 (TEET…GLQP), and 318–354 (SRDS…ATVL). The tract at residues 393–414 (SQALGPPEPPEARVPGKAQPEV) is disordered. PPR repeat units follow at residues 519-553 (DLTF…GLVP), 554-585 (NLQT…QVTP), and 586-620 (NTHI…RVPV). The segment at 672–700 (HPWQKFRTKPQGDQDTGKEADDGCALGGR) is disordered. Residues 681–692 (PQGDQDTGKEAD) are compositionally biased toward basic and acidic residues.

The protein belongs to the PTCD1 family. Associates with mitochondrial leucine tRNAs. Interacts with ELAC2. As to expression, abundant in testes, skeletal muscle and heart.

The protein localises to the mitochondrion. The protein resides in the mitochondrion matrix. In terms of biological role, mitochondrial protein implicated in negative regulation of leucine tRNA levels, as well as negative regulation of mitochondria-encoded proteins and COX activity. Also affects the 3'-processing of mitochondrial tRNAs. This is Pentatricopeptide repeat-containing protein 1, mitochondrial (PTCD1) from Homo sapiens (Human).